A 245-amino-acid polypeptide reads, in one-letter code: Eukaryotic translation initiation factor 6 (245 aa).

It belongs to the eIF-6 family. In terms of assembly, monomer. Associates with the 60S ribosomal subunit.

It is found in the cytoplasm. The protein localises to the nucleus. The protein resides in the nucleolus. Binds to the 60S ribosomal subunit and prevents its association with the 40S ribosomal subunit to form the 80S initiation complex in the cytoplasm. May also be involved in ribosome biogenesis. The polypeptide is Eukaryotic translation initiation factor 6 (eif6) (Danio rerio (Zebrafish)).